We begin with the raw amino-acid sequence, 814 residues long: Echinoderm microtubule-associated protein-like 1 (814 aa).

Positions 31–72 form a coiled coil; sequence SMEVSDRIASLEQRVQMQEDDIQLLKSALADVVRRLNITEEQ. Residues 77 to 180 form a disordered region; sequence NRKGPTKARP…ESKPKEPAFS (104 aa). The segment covering 92–101 has biased composition (polar residues); sequence PLRTTVNNGT. Positions 103–115 are enriched in low complexity; sequence LPKKPSASLPAPS. A compositionally biased stretch (polar residues) spans 127 to 137; it reads KSINRTSSSER. Positions 142–152 are enriched in basic and acidic residues; the sequence is GRRESSGDSKG. Residues 155 to 167 are compositionally biased toward low complexity; that stretch reads NRTGSTSSSSSGK. The segment at 175–814 is tandem atypical propeller in EMLs; it reads KEPAFSPEEG…DTSIMQWRVI (640 aa). WD repeat units lie at residues 260–309, 314–357, 362–399, 408–445, 449–488, 492–529, 534–571, 577–612, 616–654, 663–700, 708–767, and 774–813; these read EQLQ…IWDS, TLHV…VWDW, RLAD…FWTL, QGLF…VWGK, RISY…SWNG, KLHK…LQGT, FTPI…LWDA, VWDK…VFDT, DLVT…IYGV, RVGK…YWVP, SVET…LFSY, and APSH…QWRV.

This sequence belongs to the WD repeat EMAP family. In terms of assembly, homotrimer; self-association is mediated by the N-terminal coiled coil. Does not interact with EML3. Binds unpolymerized tubulins via its WD repeat region. Binds repolymerizing microtubules. Interacts with TASOR. Detected in adult brain cortex, hippocampus and thalamus. Expressed in the stomach, lungs and in Sertoli cells of the testis.

The protein localises to the cytoplasm. Its subcellular location is the perinuclear region. It localises to the cytoskeleton. Modulates the assembly and organization of the microtubule cytoskeleton, and probably plays a role in regulating the orientation of the mitotic spindle and the orientation of the plane of cell division. Required for normal proliferation of neuronal progenitor cells in the developing brain and for normal brain development. Does not affect neuron migration per se. This chain is Echinoderm microtubule-associated protein-like 1 (Eml1), found in Mus musculus (Mouse).